The following is a 332-amino-acid chain: L-lactate dehydrogenase A chain (332 aa).

N-acetylalanine is present on Ala-2. The residue at position 5 (Lys-5) is an N6-acetyllysine; alternate. Lys-5 is modified (N6-succinyllysine; alternate). Lys-14 bears the N6-acetyllysine mark. Residue 29–57 (GAVGMACAISILMKDLADEVALVDVMEDK) participates in NAD(+) binding. Lys-57 bears the N6-acetyllysine; alternate mark. A Glycyl lysine isopeptide (Lys-Gly) (interchain with G-Cter in SUMO2); alternate cross-link involves residue Lys-57. The residue at position 81 (Lys-81) is an N6-acetyllysine. Arg-106 is a binding site for substrate. Residue Lys-118 is modified to N6-acetyllysine; alternate. Lys-118 bears the N6-succinyllysine; alternate mark. The residue at position 126 (Lys-126) is an N6-acetyllysine. Residue Asn-138 coordinates NAD(+). Residues Asn-138 and Arg-169 each contribute to the substrate site. His-193 (proton acceptor) is an active-site residue. N6-acetyllysine is present on residues Lys-224 and Lys-232. Tyr-239 carries the post-translational modification Phosphotyrosine. At Lys-243 the chain carries N6-acetyllysine. A substrate-binding site is contributed by Thr-248. Thr-309 carries the post-translational modification Phosphothreonine. Position 318 is an N6-acetyllysine; alternate (Lys-318). Lys-318 is subject to N6-succinyllysine; alternate. Thr-322 is modified (phosphothreonine).

The protein belongs to the LDH/MDH superfamily. LDH family. Homotetramer. Interacts with PTEN upstream reading frame protein MP31. In terms of processing, ISGylated.

The protein localises to the cytoplasm. It carries out the reaction (S)-lactate + NAD(+) = pyruvate + NADH + H(+). The protein operates within fermentation; pyruvate fermentation to lactate; (S)-lactate from pyruvate: step 1/1. In terms of biological role, interconverts simultaneously and stereospecifically pyruvate and lactate with concomitant interconversion of NADH and NAD(+). This chain is L-lactate dehydrogenase A chain (LDHA), found in Bos mutus grunniens (Wild yak).